The chain runs to 610 residues: Glutamine--fructose-6-phosphate aminotransferase [isomerizing] (610 aa).

Residue Cys-2 is the Nucleophile; for GATase activity of the active site. Residues 2–217 (CGIVGYVGQK…DKEFVVLTND (216 aa)) enclose the Glutamine amidotransferase type-2 domain. SIS domains follow at residues 284 to 424 (ITKE…LKGS) and 453 to 600 (LIKE…VDKP). Lys-605 serves as the catalytic For Fru-6P isomerization activity.

In terms of assembly, homodimer.

Its subcellular location is the cytoplasm. It catalyses the reaction D-fructose 6-phosphate + L-glutamine = D-glucosamine 6-phosphate + L-glutamate. Catalyzes the first step in hexosamine metabolism, converting fructose-6P into glucosamine-6P using glutamine as a nitrogen source. The polypeptide is Glutamine--fructose-6-phosphate aminotransferase [isomerizing] (Clostridium perfringens (strain 13 / Type A)).